Consider the following 181-residue polypeptide: Probable inactive acireductone dioxygenase 2 (181 aa).

This sequence belongs to the acireductone dioxygenase (ARD) family.

It localises to the cytoplasm. The protein resides in the nucleus. Its function is as follows. Probable inactive acireductone dioxygenase. The protein is Probable inactive acireductone dioxygenase 2 of Sorghum bicolor (Sorghum).